A 311-amino-acid chain; its full sequence is Bifunctional protein FolD (311 aa).

Residues 184–186 (GAS), isoleucine 209, and isoleucine 250 contribute to the NADP(+) site.

It belongs to the tetrahydrofolate dehydrogenase/cyclohydrolase family. In terms of assembly, homodimer.

It catalyses the reaction (6R)-5,10-methylene-5,6,7,8-tetrahydrofolate + NADP(+) = (6R)-5,10-methenyltetrahydrofolate + NADPH. The catalysed reaction is (6R)-5,10-methenyltetrahydrofolate + H2O = (6R)-10-formyltetrahydrofolate + H(+). Its pathway is one-carbon metabolism; tetrahydrofolate interconversion. Functionally, catalyzes the oxidation of 5,10-methylenetetrahydrofolate to 5,10-methenyltetrahydrofolate and then the hydrolysis of 5,10-methenyltetrahydrofolate to 10-formyltetrahydrofolate. The sequence is that of Bifunctional protein FolD from Gluconacetobacter diazotrophicus (strain ATCC 49037 / DSM 5601 / CCUG 37298 / CIP 103539 / LMG 7603 / PAl5).